The primary structure comprises 249 residues: Acetate transporter protein patA (249 aa).

A run of 6 helical transmembrane segments spans residues 42–62 (IGSP…TLSM), 71–91 (AITN…LVLV), 106–126 (VFGG…PAFG), 141–161 (AIGY…VAAM), 169–189 (GMLG…FSFA), and 202–222 (AAGA…GHLM).

Belongs to the acetate uptake transporter (AceTr) (TC 2.A.96) family.

It localises to the endoplasmic reticulum membrane. Its pathway is mycotoxin biosynthesis; patulin biosynthesis. In terms of biological role, acetate transporter protein; part of the gene cluster that mediates the biosynthesis of patulin, an acetate-derived tetraketide mycotoxin produced by several fungal species that shows antimicrobial properties against several bacteria. May be involved in the uptake of acetate, a substrate for the synthesis of 6-methylsalicylic acid by the polyketide synthase patK. This is Acetate transporter protein patA from Penicillium expansum (Blue mold rot fungus).